The following is a 186-amino-acid chain: RNA polymerase sigma factor NccH (186 aa).

A Polymerase core binding motif is present at residues 49–62 (DIVQDTFIAAWHAL). The H-T-H motif DNA-binding region spans 152 to 171 (HPEAAMALGTSAKAVESRVA).

It belongs to the sigma-70 factor family. ECF subfamily.

Sigma factors are initiation factors that promote the attachment of RNA polymerase to specific initiation sites and are then released. This sigma factor regulates the genes for a membrane-located efflux system that confers resistance to nickel, cobalt and cadmium. This chain is RNA polymerase sigma factor NccH (nccH), found in Alcaligenes xylosoxydans xylosoxydans (Achromobacter xylosoxidans).